The primary structure comprises 358 residues: Small ribosomal subunit biogenesis GTPase RsgA 2 (358 aa).

Positions 106 to 261 constitute a CP-type G domain; sequence AEQLIAANVD…LIDTPGMREI (156 aa). Residues 151-154 and 203-211 contribute to the GTP site; these read SKAD and GSSGVGKST. The Zn(2+) site is built by Cys-284, Cys-289, His-291, and Cys-297.

This sequence belongs to the TRAFAC class YlqF/YawG GTPase family. RsgA subfamily. In terms of assembly, monomer. Associates with 30S ribosomal subunit, binds 16S rRNA. Requires Zn(2+) as cofactor.

It localises to the cytoplasm. In terms of biological role, one of several proteins that assist in the late maturation steps of the functional core of the 30S ribosomal subunit. Helps release RbfA from mature subunits. May play a role in the assembly of ribosomal proteins into the subunit. Circularly permuted GTPase that catalyzes slow GTP hydrolysis, GTPase activity is stimulated by the 30S ribosomal subunit. This is Small ribosomal subunit biogenesis GTPase RsgA 2 from Vibrio parahaemolyticus serotype O3:K6 (strain RIMD 2210633).